The chain runs to 515 residues: Cytochrome P450 monooxygenase mfmA (515 aa).

The chain crosses the membrane as a helical span at residues 3-23; it reads KISIIPIVGVALSLAIILQLG. Cys453 contacts heme.

It belongs to the cytochrome P450 family. The cofactor is heme.

It localises to the membrane. The protein operates within secondary metabolite biosynthesis; terpenoid biosynthesis. Functionally, cytochrome P450 monooxygenase; part of the gene cluster that mediates the biosynthesis of the phthalide-terpenoid hybrid 11'-O-desmethylfendlerol. Within the pathway, mfma and mfmC act together to convert 3,5-dimethylorsellinic acid (DMOA) into the phthalide 5,7-dihydroxy-4-(hydroxymethyl)-6-methylphthalide. MfmA performs especially an hydroxylation at C-9. The biosynthesis of 11'-O-desmethylfendlerol begins with the NR-PKS mfmB that forms 3,5-dimethylorsellinic acid (DMOA), which is then transformed into the phthalide 5,7-dihydroxy-4-(hydroxymethyl)-6-methylphthalide by the cytochrome P450 monooxygenase mfmA and the hydrolase mfmC. Subsequently, the methyltransferase mfmE catalyzes 7-O-methylation to yield 5-hydroxy-4-(hydroxymethyl)-7-methoxy-6-methylphthalide, which undergoes C-3 hydroxylation by the cytochrome P450 monooxygenase mfmF. The resultant cyclopolic acid (2,5-dihydroxy-4-(hydroxymethyl)-7-methoxy-6-methylphthalide) is then farnesylated by the DMATS-type prenyltransferase mfmD to afford 5-O-farnesylcyclopolic acid. Finally, the Pyr4-family terpene cyclase mfmH cyclizes the farnesyl moiety of 5-O-farnesylcyclopolic acid into a drimane-like structure, thus completing the biosynthesis of 11'-O-desmethylfendlerol. In Annulohypoxylon moriforme (Filamentous fungus), this protein is Cytochrome P450 monooxygenase mfmA.